A 212-amino-acid polypeptide reads, in one-letter code: Deoxyribose-phosphate aldolase (212 aa).

Catalysis depends on Asp89, which acts as the Proton donor/acceptor. Lys151 acts as the Schiff-base intermediate with acetaldehyde in catalysis. Lys180 functions as the Proton donor/acceptor in the catalytic mechanism.

It belongs to the DeoC/FbaB aldolase family. DeoC type 1 subfamily.

The protein localises to the cytoplasm. It carries out the reaction 2-deoxy-D-ribose 5-phosphate = D-glyceraldehyde 3-phosphate + acetaldehyde. The protein operates within carbohydrate degradation; 2-deoxy-D-ribose 1-phosphate degradation; D-glyceraldehyde 3-phosphate and acetaldehyde from 2-deoxy-alpha-D-ribose 1-phosphate: step 2/2. Catalyzes a reversible aldol reaction between acetaldehyde and D-glyceraldehyde 3-phosphate to generate 2-deoxy-D-ribose 5-phosphate. The protein is Deoxyribose-phosphate aldolase of Clostridium botulinum (strain Langeland / NCTC 10281 / Type F).